We begin with the raw amino-acid sequence, 352 residues long: UDP-N-acetylglucosamine--N-acetylmuramyl-(pentapeptide) pyrophosphoryl-undecaprenol N-acetylglucosamine transferase 2 (352 aa).

UDP-N-acetyl-alpha-D-glucosamine contacts are provided by residues 11–13, arginine 164, serine 194, and glutamine 289; that span reads SAG.

Belongs to the glycosyltransferase 28 family. MurG subfamily.

It localises to the cell membrane. The catalysed reaction is di-trans,octa-cis-undecaprenyl diphospho-N-acetyl-alpha-D-muramoyl-L-alanyl-D-glutamyl-meso-2,6-diaminopimeloyl-D-alanyl-D-alanine + UDP-N-acetyl-alpha-D-glucosamine = di-trans,octa-cis-undecaprenyl diphospho-[N-acetyl-alpha-D-glucosaminyl-(1-&gt;4)]-N-acetyl-alpha-D-muramoyl-L-alanyl-D-glutamyl-meso-2,6-diaminopimeloyl-D-alanyl-D-alanine + UDP + H(+). Its pathway is cell wall biogenesis; peptidoglycan biosynthesis. In terms of biological role, cell wall formation. Catalyzes the transfer of a GlcNAc subunit on undecaprenyl-pyrophosphoryl-MurNAc-pentapeptide (lipid intermediate I) to form undecaprenyl-pyrophosphoryl-MurNAc-(pentapeptide)GlcNAc (lipid intermediate II). The sequence is that of UDP-N-acetylglucosamine--N-acetylmuramyl-(pentapeptide) pyrophosphoryl-undecaprenol N-acetylglucosamine transferase 2 from Bacillus thuringiensis subsp. konkukian (strain 97-27).